A 226-amino-acid chain; its full sequence is Putative DNA repair protein recA homolog 4 (226 aa).

Residue 41–48 coordinates ATP; that stretch reads GPEASGKT.

This sequence belongs to the RecA family.

The protein localises to the cytoplasm. Involved in recombination ability and DNA strand transfer activity. The polypeptide is Putative DNA repair protein recA homolog 4 (Arabidopsis thaliana (Mouse-ear cress)).